A 209-amino-acid chain; its full sequence is Molybdenum cofactor guanylyltransferase (209 aa).

GTP-binding positions include 13–15 (LAG), Lys26, Asn54, Asp74, and Asp104. Residue Asp104 coordinates Mg(2+).

This sequence belongs to the MobA family. In terms of assembly, monomer. It depends on Mg(2+) as a cofactor.

Its subcellular location is the cytoplasm. The catalysed reaction is Mo-molybdopterin + GTP + H(+) = Mo-molybdopterin guanine dinucleotide + diphosphate. In terms of biological role, transfers a GMP moiety from GTP to Mo-molybdopterin (Mo-MPT) cofactor (Moco or molybdenum cofactor) to form Mo-molybdopterin guanine dinucleotide (Mo-MGD) cofactor. The sequence is that of Molybdenum cofactor guanylyltransferase from Acinetobacter baumannii (strain ACICU).